The chain runs to 100 residues: NADH-quinone oxidoreductase subunit K (100 aa).

3 consecutive transmembrane segments (helical) span residues L4–I24, L28–V48, and V60–L80.

This sequence belongs to the complex I subunit 4L family. In terms of assembly, NDH-1 is composed of 13 different subunits. Subunits NuoA, H, J, K, L, M, N constitute the membrane sector of the complex.

It is found in the cell inner membrane. It carries out the reaction a quinone + NADH + 5 H(+)(in) = a quinol + NAD(+) + 4 H(+)(out). In terms of biological role, NDH-1 shuttles electrons from NADH, via FMN and iron-sulfur (Fe-S) centers, to quinones in the respiratory chain. The immediate electron acceptor for the enzyme in this species is believed to be ubiquinone. Couples the redox reaction to proton translocation (for every two electrons transferred, four hydrogen ions are translocated across the cytoplasmic membrane), and thus conserves the redox energy in a proton gradient. The sequence is that of NADH-quinone oxidoreductase subunit K from Musicola paradisiaca (strain Ech703) (Dickeya paradisiaca).